The sequence spans 340 residues: Glycerol-3-phosphate dehydrogenase [NAD(P)+] (340 aa).

3 residues coordinate NADPH: S13, W14, and K108. Sn-glycerol 3-phosphate is bound by residues K108, G139, and S141. A143 contributes to the NADPH binding site. 5 residues coordinate sn-glycerol 3-phosphate: K194, D247, S257, R258, and N259. K194 (proton acceptor) is an active-site residue. An NADPH-binding site is contributed by R258. Positions 282 and 284 each coordinate NADPH.

This sequence belongs to the NAD-dependent glycerol-3-phosphate dehydrogenase family.

The protein resides in the cytoplasm. It catalyses the reaction sn-glycerol 3-phosphate + NAD(+) = dihydroxyacetone phosphate + NADH + H(+). It carries out the reaction sn-glycerol 3-phosphate + NADP(+) = dihydroxyacetone phosphate + NADPH + H(+). The protein operates within membrane lipid metabolism; glycerophospholipid metabolism. Catalyzes the reduction of the glycolytic intermediate dihydroxyacetone phosphate (DHAP) to sn-glycerol 3-phosphate (G3P), the key precursor for phospholipid synthesis. The polypeptide is Glycerol-3-phosphate dehydrogenase [NAD(P)+] (Streptococcus thermophilus (strain CNRZ 1066)).